The sequence spans 161 residues: Zinc finger A20 and AN1 domain-containing stress-associated protein 4 (161 aa).

An A20-type zinc finger spans residues 10-44 (PEGHRLCVNNCGFFGSSATMNLCSNCYGDLCLKQQ). Cysteine 16, cysteine 20, cysteine 32, and cysteine 35 together coordinate Zn(2+). A compositionally biased stretch (basic and acidic residues) spans 76 to 85 (TTKKTEEKKP). A disordered region spans residues 76–99 (TTKKTEEKKPIQIPTEQPSPPQRP). The AN1-type zinc-finger motif lies at 96–142 (PQRPNRCTVCRKRVGLTGFMCRCGTTFCGSHRYPEVHGCTFDFKSAG). Residues cysteine 102, cysteine 105, cysteine 116, cysteine 118, cysteine 123, histidine 126, histidine 132, and cysteine 134 each contribute to the Zn(2+) site.

In terms of biological role, may be involved in environmental stress response. In Arabidopsis thaliana (Mouse-ear cress), this protein is Zinc finger A20 and AN1 domain-containing stress-associated protein 4 (SAP4).